An 85-amino-acid polypeptide reads, in one-letter code: U4-theraphotoxin-Hhn1j (85 aa).

A signal peptide spans 1–22 (MKVTLIAILTCAAVLVLHTTAA). Residues 23–48 (EELEAESQLMEVGMPDTELAAVDEER) constitute a propeptide that is removed on maturation. Cystine bridges form between C52/C66, C56/C77, and C71/C82.

This sequence belongs to the neurotoxin 12 (Hwtx-2) family. 02 (Hwtx-2) subfamily. As to expression, expressed by the venom gland.

It is found in the secreted. Postsynaptic neurotoxin. This Cyriopagopus hainanus (Chinese bird spider) protein is U4-theraphotoxin-Hhn1j.